Consider the following 503-residue polypeptide: TGF-beta receptor type-1 (503 aa).

Residues 1 to 29 form the signal peptide; it reads MEVAAGAPRSRLLLFVLAATATLAPEATA. The Extracellular segment spans residues 30–126; that stretch reads FQCFCHLCTK…PPSGLGPVEL (97 aa). 5 disulfides stabilise this stretch: cysteine 32–cysteine 50, cysteine 34–cysteine 37, cysteine 44–cysteine 67, cysteine 82–cysteine 96, and cysteine 97–cysteine 102. A glycan (N-linked (GlcNAc...) asparagine) is linked at asparagine 41. Residues 127–147 traverse the membrane as a helical segment; that stretch reads AAVIAGPVCFVCISLMLMVYI. Residues 148-503 are Cytoplasmic-facing; it reads CHNRTVIHHR…QLSQQEGIKM (356 aa). Serine 165 bears the Phosphoserine mark. The 30-residue stretch at 175–204 folds into the GS domain; it reads TTLKDLIYDMTTSGSGSGLPLLVQRTIART. 2 positions are modified to phosphothreonine; by TGFBR2: threonine 185 and threonine 186. Phosphoserine; by TGFBR2 occurs at positions 187, 189, and 191. An FKBP1A-binding motif is present at residues 193 to 194; the sequence is LP. Positions 205 to 495 constitute a Protein kinase domain; that stretch reads IVLQESIGKG…LRIKKTLSQL (291 aa). ATP-binding positions include 211–219 and lysine 232; that span reads IGKGRFGEV. The active-site Proton acceptor is the aspartate 333. A Glycyl lysine isopeptide (Lys-Gly) (interchain with G-Cter in SUMO) cross-link involves residue lysine 391.

This sequence belongs to the protein kinase superfamily. TKL Ser/Thr protein kinase family. TGFB receptor subfamily. Homodimer; in the endoplasmic reticulum but also at the cell membrane. Heterohexamer; TGFB1, TGFB2 and TGFB3 homodimeric ligands assemble a functional receptor composed of two TGFBR1 and TGFBR2 heterodimers to form a ligand-receptor heterohexamer. The respective affinity of TGBRB1 and TGFBR2 for the ligands may modulate the kinetics of assembly of the receptor and may explain the different biological activities of TGFB1, TGFB2 and TGFB3. Component of a complex composed of TSC22D1 (via N-terminus), TGFBR1 and TGFBR2; the interaction between TSC22D1 and TGFBR1 is inhibited by SMAD7 and promoted by TGFB1. Interacts with CD109; inhibits TGF-beta receptor activation in keratinocytes. Interacts with RBPMS. Interacts (unphosphorylated) with FKBP1A; prevents TGFBR1 phosphorylation by TGFBR2 and stabilizes it in the inactive conformation. Interacts with SMAD2, SMAD3 and ZFYVE9; ZFYVE9 recruits SMAD2 and SMAD3 to the TGF-beta receptor. Interacts with TRAF6 and MAP3K7; induces MAP3K7 activation by TRAF6. Interacts with PARD6A; involved in TGF-beta induced epithelial to mesenchymal transition. Interacts with NEDD4L. Interacts with SMAD7, SMURF1 and SMURF2; SMAD7 recruits NEDD4L, SMURF1 and SMURF2 to the TGF-beta receptor. Interacts with USP15 and VPS39. Interacts with SDCBP (via C-terminus). Interacts with CAV1 and this interaction is impaired in the presence of SDCBP. Interacts with APPL1; interaction is TGF beta dependent; mediates trafficking of the TGFBR1 from the endosomes to the nucleus via microtubules in a TRAF6-dependent manner. Interacts with GPR50; this interaction promotes the constitutive activation of SMAD signaling pathway. Requires Mg(2+) as cofactor. Mn(2+) serves as cofactor. Post-translationally, phosphorylated at basal levels in the absence of ligand. Activated upon phosphorylation by TGFBR2, mainly in the GS domain. Phosphorylation in the GS domain abrogates FKBP1A-binding. In terms of processing, N-Glycosylated. Ubiquitinated; undergoes ubiquitination catalyzed by several E3 ubiquitin ligases including SMURF1, SMURF2 and NEDD4L2. Results in the proteasomal and/or lysosomal degradation of the receptor thereby negatively regulating its activity. Deubiquitinated by USP15, leading to stabilization of the protein and enhanced TGF-beta signal. Its ubiquitination and proteasome-mediated degradation is negatively regulated by SDCBP.

The protein resides in the cell membrane. It localises to the cell junction. It is found in the tight junction. The protein localises to the membrane raft. Its subcellular location is the cell surface. The catalysed reaction is L-threonyl-[receptor-protein] + ATP = O-phospho-L-threonyl-[receptor-protein] + ADP + H(+). The enzyme catalyses L-seryl-[receptor-protein] + ATP = O-phospho-L-seryl-[receptor-protein] + ADP + H(+). With respect to regulation, kept in an inactive conformation by FKBP1A preventing receptor activation in absence of ligand. CD109 is another inhibitor of the receptor. Its function is as follows. Transmembrane serine/threonine kinase forming with the TGF-beta type II serine/threonine kinase receptor, TGFBR2, the non-promiscuous receptor for the TGF-beta cytokines TGFB1, TGFB2 and TGFB3. Transduces the TGFB1, TGFB2 and TGFB3 signal from the cell surface to the cytoplasm and is thus regulating a plethora of physiological and pathological processes including cell cycle arrest in epithelial and hematopoietic cells, control of mesenchymal cell proliferation and differentiation, wound healing, extracellular matrix production, immunosuppression and carcinogenesis. The formation of the receptor complex composed of 2 TGFBR1 and 2 TGFBR2 molecules symmetrically bound to the cytokine dimer results in the phosphorylation and the activation of TGFBR1 by the constitutively active TGFBR2. Activated TGFBR1 phosphorylates SMAD2 which dissociates from the receptor and interacts with SMAD4. The SMAD2-SMAD4 complex is subsequently translocated to the nucleus where it modulates the transcription of the TGF-beta-regulated genes. This constitutes the canonical SMAD-dependent TGF-beta signaling cascade. Also involved in non-canonical, SMAD-independent TGF-beta signaling pathways. For instance, TGFBR1 induces TRAF6 autoubiquitination which in turn results in MAP3K7 ubiquitination and activation to trigger apoptosis. Also regulates epithelial to mesenchymal transition through a SMAD-independent signaling pathway through PARD6A phosphorylation and activation. The polypeptide is TGF-beta receptor type-1 (TGFBR1) (Sus scrofa (Pig)).